Reading from the N-terminus, the 90-residue chain is MATADHEATGLDCDHAIRRLLRRIDAHIADEPRDSPVRRYLERELGGREGTEADTRLVVHAQINVVRELFERRSDADGLRLLSNIERECC.

Belongs to the CowN family.

In terms of biological role, is required to sustain N(2)-dependent growth in the presence of low levels of carbon monoxide (CO). Probably acts by protecting the N(2) fixation ability of the nitrogenase complex, which is inactivated in the presence of CO. The polypeptide is N(2)-fixation sustaining protein CowN (Halorhodospira halophila (strain DSM 244 / SL1) (Ectothiorhodospira halophila (strain DSM 244 / SL1))).